We begin with the raw amino-acid sequence, 133 residues long: ATP synthase epsilon chain (133 aa).

Belongs to the ATPase epsilon chain family. F-type ATPases have 2 components, CF(1) - the catalytic core - and CF(0) - the membrane proton channel. CF(1) has five subunits: alpha(3), beta(3), gamma(1), delta(1), epsilon(1). CF(0) has three main subunits: a, b and c.

The protein localises to the cell membrane. Functionally, produces ATP from ADP in the presence of a proton gradient across the membrane. This is ATP synthase epsilon chain from Clostridium botulinum (strain Langeland / NCTC 10281 / Type F).